A 73-amino-acid chain; its full sequence is Sodium channel neurotoxin MeuNaTxalpha-13 (73 aa).

Positions threonine 1–serine 5 are cleaved as a signal peptide. The LCN-type CS-alpha/beta domain maps to arginine 7–histidine 71. 4 disulfide bridges follow: cysteine 17-cysteine 70, cysteine 21-cysteine 43, cysteine 29-cysteine 53, and cysteine 33-cysteine 55. The propeptide at arginine 72 to arginine 73 is removed by a carboxypeptidase.

The protein belongs to the long (4 C-C) scorpion toxin superfamily. Sodium channel inhibitor family. Alpha subfamily. In terms of tissue distribution, expressed by the venom gland.

Its subcellular location is the secreted. Functionally, alpha toxins bind voltage-independently at site-3 of sodium channels (Nav) and inhibit the inactivation of the activated channels, thereby blocking neuronal transmission. This is Sodium channel neurotoxin MeuNaTxalpha-13 from Mesobuthus eupeus (Lesser Asian scorpion).